A 208-amino-acid polypeptide reads, in one-letter code: MADLSAQDKLKQICDTLREETLKPAEEEAGSIVHNAREQAKRIVEEAKEEAQRIIRSAEETASQTLKKGEAALVQAGKRSLENLKQAVETKIFKESLVEWLDGVTTDPGVSAKFVQALVQTVETQGISGNLSACIGKHVSARAVNEALGKEITSKLKDKGVVIGKFSGGAQLKVEERNWVLDISSEALLDLLTRFLQKDFREMIFQSC.

The protein belongs to the V-ATPase E subunit family.

Its function is as follows. Produces ATP from ADP in the presence of a proton gradient across the membrane. This is V-type ATP synthase subunit E (atpE) from Chlamydia muridarum (strain MoPn / Nigg).